The sequence spans 814 residues: Transcription activator of gluconeogenesis PADG_03802 (814 aa).

The tract at residues 1–90 is disordered; sequence MTSSARNGSP…SAKDPLRPRR (90 aa). Positions 69 to 83 are enriched in low complexity; that stretch reads STSSTAASANNASAK. The zn(2)-C6 fungal-type DNA-binding region spans 97–125; the sequence is CFACQRAHLTCGDERPCQRCIKRGLQDTC. Disordered stretches follow at residues 164–208, 236–287, 323–384, 442–461, 598–617, and 695–739; these read NTNS…TNNY, SAFQ…PTFF, AGDT…SRNI, PPTN…STPS, TGGS…YNSR, and SAAG…ATNV. A compositionally biased stretch (low complexity) spans 171–188; sequence NGTNSNSDNNSTNTNSNN. Polar residues-rich tracts occupy residues 189 to 208, 248 to 279, 339 to 359, and 375 to 384; these read KPSH…TNNY, FDLS…SQNP, GRSS…NQSP, and GQGQTNSRNI. A compositionally biased stretch (low complexity) spans 442-451; the sequence is PPTNTQHQQQ. A compositionally biased stretch (low complexity) spans 720 to 739; that stretch reads GTTSAVNGVSNGSGNNATNV.

The protein belongs to the ERT1/acuK family.

It is found in the nucleus. In terms of biological role, transcription factor which regulates nonfermentable carbon utilization. Activator of gluconeogenetic genes. The polypeptide is Transcription activator of gluconeogenesis PADG_03802 (Paracoccidioides brasiliensis (strain Pb18)).